The sequence spans 311 residues: Dihydroorotate dehydrogenase A (fumarate) (311 aa).

FMN is bound by residues Ser-19 and 43 to 44 (KS). Substrate is bound by residues Lys-43, 67 to 71 (NSMGL), and Asn-127. Asn-127 contacts FMN. Residue Cys-130 is the Nucleophile of the active site. FMN contacts are provided by Lys-164 and Val-192. 193-194 (NS) serves as a coordination point for substrate. FMN contacts are provided by residues Gly-221, 249–250 (GG), and 271–272 (GT).

The protein belongs to the dihydroorotate dehydrogenase family. Type 1 subfamily. Homodimer. FMN serves as cofactor.

It localises to the cytoplasm. It catalyses the reaction (S)-dihydroorotate + fumarate = orotate + succinate. It functions in the pathway pyrimidine metabolism; UMP biosynthesis via de novo pathway. Functionally, catalyzes the conversion of dihydroorotate to orotate with fumarate as the electron acceptor. This chain is Dihydroorotate dehydrogenase A (fumarate) (pyrDA), found in Lactococcus lactis subsp. cremoris (Streptococcus cremoris).